We begin with the raw amino-acid sequence, 2883 residues long: Desmoplakin (2883 aa).

The segment at 1–21 (MSCNGGSHPRINTLGRMTRAE) is disordered. An interaction with PKP1, JUP, PKP2 region spans residues 1–596 (MSCNGGSHPR…DYMKTIEDLE (596 aa)). The segment at 1 to 1068 (MSCNGGSHPR…ANSENCNKNK (1068 aa)) is globular 1. The residue at position 22 (S22) is a Phosphoserine. T59 is subject to Phosphothreonine. S65 carries the phosphoserine modification. Y68 bears the Phosphotyrosine mark. Residue T73 is modified to Phosphothreonine. S177, S178, and S188 each carry phosphoserine. 2 Spectrin repeats span residues 190 to 283 (SGWD…HLRQ) and 284 to 387 (LQNI…LKEN). A Spectrin 3a repeat occupies 388–458 (AAYFQFFEEA…NLVNKSKKIV (71 aa)). One can recognise an SH3 domain in the interval 470-527 (NKPIILRALCDYKQDQKIVHKGDECILKDNNERSKWYVTGPGGVDMLVPSVGLIIPPP). The Spectrin 3b repeat unit spans residues 528 to 557 (NPLAVDLSCKIEQYYEAILALWNQLYINMK). 3 Spectrin repeats span residues 558–639 (SLVS…IQLP), 666–781 (VIET…SLCS), and 782–895 (VRAL…DLEK). Positions 1034–1956 (KSLEDLKLKN…LQKEIEKLRQ (923 aa)) form a coiled coil. Residues 1069 to 1957 (FLDQNLQKYQ…QKEIEKLRQR (889 aa)) are central fibrous rod domain. Phosphoserine is present on residues S1670, S1720, and S2036. Residues 1958 to 2882 (PYGSHRETQT…YSFSSSSIGG (925 aa)) are globular 2. Residues 1972-2220 (TVDSSKLVFD…LLLSVQKRSM (249 aa)) are 4.5 X 38 AA tandem repeats (Domain A). 17 Plectin repeats span residues 2021–2057 (QPFL…PEST), 2058–2095 (VMLL…FDDR), 2096–2133 (QQIY…RETG), 2134–2171 (MRLL…RDLY), 2175–2209 (NDPR…PHTG), 2210–2245 (LLLL…PSTV), 2263–2300 (KDFL…PGTA), 2301–2338 (LELL…IEFK), 2339–2376 (EKLL…KGHG), 2377–2414 (IRLL…EELS), 2418–2452 (SDPS…EETG), 2468–2505 (SQKN…YDTF), 2519–2556 (TITG…RKFF), 2622–2659 (SDPL…SITG), 2660–2697 (QRLL…QDMA), 2736–2773 (QRFL…GRAA), and 2774–2811 (QRLQ…DITG). Residues S2219, S2221, and S2237 each carry the phosphoserine modification. A 4.5 X 38 AA tandem repeats (Domain B) region spans residues 2256–2458 (DEVGERIKDF…EETGLCLLPL (203 aa)). The Omega-hydroxyceramide glutamate ester moiety is linked to residue Q2492. The segment at 2621–2833 (LSDPLEESSP…GLPSPYNMSA (213 aa)) is 4.5 X 38 AA tandem repeats (Domain C). Phosphoserine occurs at positions 2822 and 2827. The disordered stretch occupies residues 2822–2883 (SKGLPSPYNM…SFSSSSIGGY (62 aa)). At Y2829 the chain carries Phosphotyrosine. Residues S2832 and S2836 each carry the phosphoserine modification. The interval 2835-2858 (GSRSGSRSGSRSGSRSGSRSGSRR) is 6 X 4 AA tandem repeats of G-S-R-[SR]. The segment covering 2835-2858 (GSRSGSRSGSRSGSRSGSRSGSRR) has biased composition (low complexity). An omega-N-methylarginine mark is found at R2837 and R2858. S2860 carries the phosphoserine modification. T2864 carries the post-translational modification Phosphothreonine. Over residues 2867–2883 (SSYSYSYSFSSSSIGGY) the composition is skewed to low complexity. S2879 is subject to Phosphoserine.

It belongs to the plakin or cytolinker family. In terms of assembly, homodimer. Interacts with COL17A1 (via cytoplasmic region). Interacts with DSC2. Interacts with PKP1. Interacts with PKP2. Interacts weakly with TMEM65. In terms of processing, phosphorylation at Ser-2860 increases association with intermediate filament cytokeratin, potentially facilitating interaction between desmosome junctions and intermediate filament architecture. In terms of tissue distribution, expressed in undifferentiated keratinocytes of the epidermis at birth, expression increases as differentiation proceeds (at protein level). Abundantly expressed in the suprabasal layers and weakly in the basal layers of the outer hair root sheath (at protein level). Expressed at intercalated disks in cardiomyocytes (at protein level).

It localises to the cell junction. The protein localises to the desmosome. Its subcellular location is the cell membrane. It is found in the cytoplasm. Functionally, major high molecular weight protein of desmosomes. Regulates profibrotic gene expression in cardiomyocytes via activation of the MAPK14/p38 MAPK signaling cascade and increase in TGFB1 protein abundance. The sequence is that of Desmoplakin from Mus musculus (Mouse).